Reading from the N-terminus, the 1049-residue chain is MSSRGGGGGGRRGGRGGGGGREGGGGGGGGGGRGGQGRGDLGVVGERQGGGRGAGERGGRHDAPRGRGGVAVGAGAGRQQQQPFHAPAPPSGGGGRGGVQVQPNAAARRPVGGGRGGVGVPAPAPAVAVGALCGEMKGKMVVSGGAPPAGQGSSLAAAQGTDNVKREPSQVAAPAPAPPPATLPPSSSKAVTFPARPDVGTIGRRCRVRANHFLVQVADKDIYHYDVVITPESTYRERNRSIINKLVALHKQFLDGRLPVYDGRKSIYTAGPLPFKTKDFVVKHINPLRGNQREEEYKVTIKQASKTDLYSLKQFLVGRQRELPQDTIQALDIALRECPTSVNFTCDRYVSISRSFFSQSFGHGGEIGSGTECWRGYYQSLRPTQMGLSLNIDISATAFYKAQPVMDFAVQYLNIRDVSRRLSDQDRIKLKKALKGVQIVATHWKEKSIRYKITGIPSAPMNELMFDLDGNRISVVQYFKKQYNYSLKHVNWPCLQAGSDSRPKYLPMEVCSILEGQRYSKKLNEHQVTNILRMTCERPAQRESSIIEIVNTNSYGNDDCAKEFGIKVANQLAVVDARVLPTPRLKYHDSGREKVCNPSVGQWNMINKRMVNGGCINHWTCLSFASRMHVNDIRMFCEDLVGMCNNIGMQMNTRPCVDIIQGQQRNIEGAIRNIHRQSSEKLDQQDLTGQQLQLLIVILTEISGSYGRIKRICETEVGVITQCCAPKSLQKGGKQYLENLALKMNVKVGGRNTVLEDALHKKIPILTDRPTIVFGADVTHPSPGEDASPSIAAVVASMDWPEVTKYKCLVSTQSHREEIISNLYTEVKDPLKGIIRGGMIRELLRSFYQETGQKPSRIIFYRDGISEGQFSQVLLYEMDAIRKACASLQEGYLPPVTFVVVQKRHHTRLFPENRRDMMDRSGNILPGTVVDTMICHPSEFDFYLCSHSGIKGTSRPTHYHVLLDENGFKADTLQTLTYNLSYTYARCTRAVSIVPPAYYAHLGAFRARYYMEDEHSDQGSSSSVTTRTDRSTKPLPEIKENVKRFMFYC.

The segment covering M1–G53 has biased composition (gly residues). 2 disordered regions span residues M1 to V101 and G144 to T192. Basic and acidic residues predominate over residues A54–R65. Over residues G66–A76 the composition is skewed to gly residues. The span at G144–G160 shows a compositional bias: low complexity. The 112-residue stretch at P404 to E515 folds into the PAZ domain. Residues L694–E1012 form the Piwi domain.

It belongs to the argonaute family. Ago subfamily.

Its function is as follows. Probably involved in the RNA silencing pathway. May bind to short RNAs such as microRNAs (miRNAs) or short interfering RNAs (siRNAs), and represses the translation of mRNAs which are complementary to them. This chain is Protein argonaute 12 (AGO12), found in Oryza sativa subsp. japonica (Rice).